Reading from the N-terminus, the 307-residue chain is Elongation factor Ts (307 aa).

An involved in Mg(2+) ion dislocation from EF-Tu region spans residues 80-83 (TDFV).

This sequence belongs to the EF-Ts family.

It is found in the cytoplasm. In terms of biological role, associates with the EF-Tu.GDP complex and induces the exchange of GDP to GTP. It remains bound to the aminoacyl-tRNA.EF-Tu.GTP complex up to the GTP hydrolysis stage on the ribosome. This chain is Elongation factor Ts, found in Methylobacterium sp. (strain 4-46).